Reading from the N-terminus, the 678-residue chain is UvrABC system protein B (678 aa).

The Helicase ATP-binding domain maps to 31-417 (EGLENGLAHQ…KSGGEIIDQV (387 aa)). ATP is bound at residue 44-51 (GVTGSGKT). A Beta-hairpin motif is present at residues 97 to 120 (YYDYYQPEAYVPSSDTFIEKDASI). Residues 436 to 589 (QVDDLLSEAR…QMKYNEARGI (154 aa)) enclose the Helicase C-terminal domain. Residues 638–673 (QQQIKKLEQQMYKYAQDLEFEKAAAVRDQLQQLREH) enclose the UVR domain.

Belongs to the UvrB family. As to quaternary structure, forms a heterotetramer with UvrA during the search for lesions. Interacts with UvrC in an incision complex.

The protein resides in the cytoplasm. In terms of biological role, the UvrABC repair system catalyzes the recognition and processing of DNA lesions. A damage recognition complex composed of 2 UvrA and 2 UvrB subunits scans DNA for abnormalities. Upon binding of the UvrA(2)B(2) complex to a putative damaged site, the DNA wraps around one UvrB monomer. DNA wrap is dependent on ATP binding by UvrB and probably causes local melting of the DNA helix, facilitating insertion of UvrB beta-hairpin between the DNA strands. Then UvrB probes one DNA strand for the presence of a lesion. If a lesion is found the UvrA subunits dissociate and the UvrB-DNA preincision complex is formed. This complex is subsequently bound by UvrC and the second UvrB is released. If no lesion is found, the DNA wraps around the other UvrB subunit that will check the other stand for damage. The protein is UvrABC system protein B of Pasteurella multocida (strain Pm70).